Consider the following 396-residue polypeptide: Tryptophan synthase beta chain (396 aa).

An N6-(pyridoxal phosphate)lysine modification is found at lysine 86.

This sequence belongs to the TrpB family. In terms of assembly, tetramer of two alpha and two beta chains. Pyridoxal 5'-phosphate is required as a cofactor.

The catalysed reaction is (1S,2R)-1-C-(indol-3-yl)glycerol 3-phosphate + L-serine = D-glyceraldehyde 3-phosphate + L-tryptophan + H2O. The protein operates within amino-acid biosynthesis; L-tryptophan biosynthesis; L-tryptophan from chorismate: step 5/5. In terms of biological role, the beta subunit is responsible for the synthesis of L-tryptophan from indole and L-serine. The protein is Tryptophan synthase beta chain of Vibrio atlanticus (strain LGP32) (Vibrio splendidus (strain Mel32)).